The chain runs to 63 residues: uncharacterized protein (63 aa).

The first 15 residues, 1–15 (MRNPVVWGMIYFAVG), serve as a signal peptide directing secretion. The N-palmitoyl cysteine moiety is linked to residue Cys-16. Cys-16 carries S-diacylglycerol cysteine lipidation. Residues 34-56 (SILLMVFAAYNISISFKMFAFSF) form a helical membrane-spanning segment.

The protein resides in the cell membrane. This is an uncharacterized protein from Bacillus subtilis (strain 168).